Consider the following 443-residue polypeptide: Thymidine phosphorylase (443 aa).

Belongs to the thymidine/pyrimidine-nucleoside phosphorylase family. As to quaternary structure, homodimer.

The catalysed reaction is thymidine + phosphate = 2-deoxy-alpha-D-ribose 1-phosphate + thymine. It participates in pyrimidine metabolism; dTMP biosynthesis via salvage pathway; dTMP from thymine: step 1/2. Its function is as follows. The enzymes which catalyze the reversible phosphorolysis of pyrimidine nucleosides are involved in the degradation of these compounds and in their utilization as carbon and energy sources, or in the rescue of pyrimidine bases for nucleotide synthesis. This Photobacterium profundum (strain SS9) protein is Thymidine phosphorylase.